Consider the following 302-residue polypeptide: Tyrosine recombinase XerC (302 aa).

Residues 6 to 90 (DLEVTCLQDY…AIKQWGEFLL (85 aa)) form the Core-binding (CB) domain. The Tyr recombinase domain maps to 111–290 (PLPKNMDVDS…DFQHLAKVYD (180 aa)). Active-site residues include arginine 150, lysine 174, histidine 242, arginine 245, and histidine 268. Tyrosine 277 functions as the O-(3'-phospho-DNA)-tyrosine intermediate in the catalytic mechanism.

This sequence belongs to the 'phage' integrase family. XerC subfamily. Forms a cyclic heterotetrameric complex composed of two molecules of XerC and two molecules of XerD.

Its subcellular location is the cytoplasm. Functionally, site-specific tyrosine recombinase, which acts by catalyzing the cutting and rejoining of the recombining DNA molecules. The XerC-XerD complex is essential to convert dimers of the bacterial chromosome into monomers to permit their segregation at cell division. It also contributes to the segregational stability of plasmids. This Shewanella putrefaciens (strain CN-32 / ATCC BAA-453) protein is Tyrosine recombinase XerC.